We begin with the raw amino-acid sequence, 106 residues long: Large ribosomal subunit protein uL24 (106 aa).

Belongs to the universal ribosomal protein uL24 family. Part of the 50S ribosomal subunit.

One of two assembly initiator proteins, it binds directly to the 5'-end of the 23S rRNA, where it nucleates assembly of the 50S subunit. Functionally, one of the proteins that surrounds the polypeptide exit tunnel on the outside of the subunit. The protein is Large ribosomal subunit protein uL24 of Acidovorax sp. (strain JS42).